Reading from the N-terminus, the 83-residue chain is U5-theraphotoxin-Hs1a 1 (83 aa).

The signal sequence occupies residues 1–21; the sequence is MKTSMFLTLTGLGLLFVVCYA. The propeptide occupies 22-49; it reads SESEEKEFPKELLSSIFAADSDFKVEER. 3 disulfides stabilise this stretch: C51–C63, C56–C68, and C62–C75.

The protein belongs to the neurotoxin 10 (Hwtx-1) family. 51 (Hntx-8) subfamily. Hntx-8 sub-subfamily. Expressed by the venom gland.

The protein resides in the secreted. Its function is as follows. Agglutinates human and mice erythrocytes. This activity can be specifically inhibited by mannosamine. This lectin shows very low toxicity in both mammals and insects. This is U5-theraphotoxin-Hs1a 1 from Cyriopagopus schmidti (Chinese bird spider).